We begin with the raw amino-acid sequence, 480 residues long: Adenosylhomocysteinase (480 aa).

Residues Thr63, Asp142, and Glu203 each contribute to the substrate site. 204–206 (TTT) provides a ligand contact to NAD(+). Substrate-binding residues include Lys233 and Asp237. NAD(+)-binding positions include Asn238, 267 to 272 (GYGDVG), Glu290, Asn325, 346 to 348 (IGH), and Asn394.

Belongs to the adenosylhomocysteinase family. The cofactor is NAD(+).

The protein localises to the cytoplasm. The catalysed reaction is S-adenosyl-L-homocysteine + H2O = L-homocysteine + adenosine. Its pathway is amino-acid biosynthesis; L-homocysteine biosynthesis; L-homocysteine from S-adenosyl-L-homocysteine: step 1/1. In terms of biological role, may play a key role in the regulation of the intracellular concentration of adenosylhomocysteine. The polypeptide is Adenosylhomocysteinase (Xanthomonas oryzae pv. oryzae (strain PXO99A)).